Reading from the N-terminus, the 183-residue chain is Translation initiation factor IF-3 (183 aa).

Belongs to the IF-3 family. Monomer.

It localises to the cytoplasm. Its function is as follows. IF-3 binds to the 30S ribosomal subunit and shifts the equilibrium between 70S ribosomes and their 50S and 30S subunits in favor of the free subunits, thus enhancing the availability of 30S subunits on which protein synthesis initiation begins. The protein is Translation initiation factor IF-3 of Pseudomonas aeruginosa (strain ATCC 15692 / DSM 22644 / CIP 104116 / JCM 14847 / LMG 12228 / 1C / PRS 101 / PAO1).